We begin with the raw amino-acid sequence, 1869 residues long: Chitin synthase csm1 (1869 aa).

The Myosin motor domain maps to 1 to 778 (MAQHRCVGGN…CWMEIAQLSD (778 aa)). Position 103-110 (103-110 (GESGSGKT)) interacts with ATP. 4 N-linked (GlcNAc...) asparagine glycosylation sites follow: Asn-122, Asn-290, Asn-427, and Asn-558. The disordered stretch occupies residues 579–653 (HPQERTTVMQ…KPSEEGASGQ (75 aa)). Over residues 583–593 (RTTVMQASVSS) the composition is skewed to polar residues. Residues 658–682 (LDNVTKSFHAQNTNAYFVFCLKPND) are actin-binding. The N-linked (GlcNAc...) asparagine glycan is linked to Asn-660. Transmembrane regions (helical) follow at residues 880-900 (WVFI…QHLG) and 919-939 (FIIW…PMLV). N-linked (GlcNAc...) asparagine glycans are attached at residues Asn-1029, Asn-1054, and Asn-1120. A helical transmembrane segment spans residues 1191 to 1211 (FILAVTIILCSIIAFKFFAAL). N-linked (GlcNAc...) asparagine glycans are attached at residues Asn-1448 and Asn-1554. 3 helical membrane-spanning segments follow: residues 1579–1599 (FIVF…AYIV), 1612–1632 (VPVL…IIFI), and 1639–1659 (MIAW…GLPL). The DEK-C domain maps to 1811–1866 (LPSDDALLAEIREILRTADLMTVTKKGVKQELERRFGVNLDSRRAYINSATEALLS).

The protein in the N-terminal section; belongs to the TRAFAC class myosin-kinesin ATPase superfamily. Myosin family. It in the C-terminal section; belongs to the chitin synthase family. Class V subfamily.

It localises to the cell membrane. Its subcellular location is the cell septum. It is found in the cell tip. It catalyses the reaction [(1-&gt;4)-N-acetyl-beta-D-glucosaminyl](n) + UDP-N-acetyl-alpha-D-glucosamine = [(1-&gt;4)-N-acetyl-beta-D-glucosaminyl](n+1) + UDP + H(+). Functionally, polymerizes chitin, a structural polymer of the cell wall and septum, by transferring the sugar moiety of UDP-GlcNAc to the non-reducing end of the growing chitin polymer. Involved in mycelial growth. This chain is Chitin synthase csm1, found in Pyricularia grisea (Crabgrass-specific blast fungus).